A 1062-amino-acid chain; its full sequence is Inversin (1062 aa).

16 ANK repeats span residues 13-42, 47-76, 80-110, 113-144, 148-177, 181-213, 220-250, 254-283, 288-317, 321-350, 356-385, 389-418, 422-451, 455-484, 488-517, and 523-553; these read SLAS…ALRD, FGRT…DVNK, SRRT…WMQK, EEMT…EVDT, NKQT…NIGI, EGKI…TESL, EGRT…NITS, LFRT…SGTI, QGAT…VKDD, EGRT…DIDI, YGGT…QVDA, MKHT…RVDL, DGHS…NPNV, AGRT…DPNI, EGRT…FPNQ, and ERYT…SIAA. 3-hydroxyasparagine is present on Asn75. The D-box 1 signature appears at 490–498; it reads RTALHWSCN. Residues 555 to 584 form the IQ 1 domain; the sequence is QDIAAFKIQAVYKGYKVRKAFRDRKNLLMK. The span at 589–608 shows a compositional bias: basic and acidic residues; the sequence is RKDAAAKKREEENKRKEAEQ. Residues 589 to 849 form a disordered region; it reads RKDAAAKKRE…QDKLIGGVSS (261 aa). 2 stretches are compositionally biased toward polar residues: residues 636–658 and 676–689; these read QNEG…TVQS and QGDS…TASR. Basic and acidic residues predominate over residues 690 to 700; that stretch reads KPSETPIEHCR. Residues 713–724 are compositionally biased toward polar residues; sequence GGNSSKNQGTSS. 2 stretches are compositionally biased toward basic and acidic residues: residues 725-741 and 775-788; these read VEKR…RCEE and DHPR…DRAA. The D-box 2 signature appears at 907-915; that stretch reads RKELFRRKN. The IQ 2 domain occupies 914 to 943; the sequence is KNKAAAVIQRAWRSYQLRKHLSRLLHLKQL. The segment at 1042-1062 is disordered; that stretch reads RSKKFSYNLQPSSQSKNKPKL. The segment covering 1046-1062 has biased composition (polar residues); that stretch reads FSYNLQPSSQSKNKPKL.

As to quaternary structure, interacts with microtubules. Interacts with NPHP1. Interacts with DVL1, PRICKLE (PRICKLE1 or PRICKLE2) and Strabismus (VANGL1 or VANGL2). Binds calmodulin via its IQ domains. Interacts with APC2. Interacts with alpha-, beta-, and gamma-catenin. Interacts with N-cadherin (CDH2). Interacts with NPHP3. Interacts with IQCB1; the interaction likely requires additional interactors. Component of a complex containing at least ANKS6, INVS, NEK8 and NPHP3. ANKS6 may organize complex assembly by linking INVS and NPHP3 to NEK8 and INVS may target the complex to the proximal ciliary axoneme. Post-translationally, may be ubiquitinated via its interaction with APC2. Hydroxylated at Asn-75, most probably by HIF1AN. Strongly expressed in the primary cilia of renal cells, especially in the varicosities, swellings observed in the cilia. Localizes in the node monocilia and in other 9+0 monocilia, including those of kidney epithelial cells and the pituitary gland, but it does not localize to 9+2 cilia (at protein level). In adult, it is expressed at high level in liver and kidney. Weakly or not expressed in other tissues.

The protein localises to the cytoplasm. Its subcellular location is the cytoskeleton. It localises to the membrane. It is found in the nucleus. The protein resides in the perinuclear region. The protein localises to the spindle. In terms of biological role, required for normal renal development and establishment of left-right axis. Probably acts as a molecular switch between different Wnt signaling pathways. Inhibits the canonical Wnt pathway by targeting cytoplasmic disheveled (DVL1) for degradation by the ubiquitin-proteasome. This suggests that it is required in renal development to oppose the repression of terminal differentiation of tubular epithelial cells by Wnt signaling. Involved in the organization of apical junctions in kidney cells together with NPHP1, NPHP4 and RPGRIP1L/NPHP8. Does not seem to be strictly required for ciliogenesis. The chain is Inversin (Invs) from Mus musculus (Mouse).